Reading from the N-terminus, the 665-residue chain is Zinc finger CCCH domain-containing protein 45 (665 aa).

The disordered stretch occupies residues 1 to 55 (MDDGDLSFDFEGGLDQPPAGGGGGPAPHSSDPGGVGGGGGGGGPGDGGGHGRGRG). Residues 33–50 (GGVGGGGGGGGPGDGGGH) are compositionally biased toward gly residues. 3 C3H1-type zinc fingers span residues 58 to 85 (SYRQ…HQFD), 86 to 113 (KARM…HSYD), and 114 to 139 (DVKE…HVKL). Residues 167-256 (HNNYNQQGER…QATRIATPLP (90 aa)) are disordered. Positions 169-200 (NYNQQGERPQHPQGSGLPNQNSIDNTTTTTAQ) are enriched in polar residues. The segment covering 205–238 (QQAQTTNQQPPQQQQQQQQQQQQQQKPNTNDQVQ) has biased composition (low complexity). Polar residues predominate over residues 239–250 (SVPNGSSNQATR). The 136-residue stretch at 260-395 (SRYFIVKSCN…FIGEQLASLL (136 aa)) folds into the YTH domain. A coiled-coil region spans residues 432–459 (DIVLFDDNEEEEEEESEEEEEGNGQESQ). A compositionally biased stretch (acidic residues) spans 439–454 (NEEEEEEESEEEEEGN). 2 disordered regions span residues 439–469 (NEEE…GMMW) and 561–665 (GPLM…SRKR). A compositionally biased stretch (gly residues) spans 561–573 (GPLMGGLGMGGPG). The span at 596-623 (TKREQRRPGGERGDRYETTSDQGSRGHD) shows a compositional bias: basic and acidic residues.

The sequence is that of Zinc finger CCCH domain-containing protein 45 from Oryza sativa subsp. japonica (Rice).